The chain runs to 282 residues: Phenylethanolamine N-methyltransferase (282 aa).

A Phosphoserine modification is found at Ser-7. S-adenosyl-L-methionine-binding positions include Tyr-35, Tyr-40, Gly-79–Ser-80, Tyr-85, Asp-101, Asn-106, Asp-158–Val-159, and Ala-181. 2 residues coordinate octopamine: Glu-219 and Asp-267.

It catalyses the reaction phenylethanolamine + S-adenosyl-L-methionine = N-methylphenylethanolamine + S-adenosyl-L-homocysteine + H(+). The enzyme catalyses (R)-noradrenaline + S-adenosyl-L-methionine = (R)-adrenaline + S-adenosyl-L-homocysteine + H(+). It carries out the reaction (R)-normetanephrine + S-adenosyl-L-methionine = (R)-metanephrine + S-adenosyl-L-homocysteine + H(+). The catalysed reaction is (R)-octopamine + S-adenosyl-L-methionine = (R)-synephrine + S-adenosyl-L-homocysteine + H(+). It functions in the pathway catecholamine biosynthesis; (R)-adrenaline biosynthesis; (R)-adrenaline from (R)-noradrenaline: step 1/1. Inhibited by methyl methanethiosulfonate, phenylglyoxal, tetranitromethane and diethyl pyrocarbonate. Inhibited by 4-oxo-1,4-dihydro-quinoline-3,7-dicarboxylic acid, 4-(benzo[d][1,3]dioxol-5-ylamino)-4-oxobutanoic acid and 1,4-diaminonaphthalene-2,6-disulfonic acid. Catalyzes the transmethylation of nonepinephrine (noradrenaline) to form epinephrine (adrenaline), using S-adenosyl-L-methionine as the methyl donor. Other substrates include phenylethanolamine and octopamine. Also methylates normetanephrine. This is Phenylethanolamine N-methyltransferase (PNMT) from Homo sapiens (Human).